Reading from the N-terminus, the 275-residue chain is NAD(P)H dehydrogenase [quinone] 1 (275 aa).

Residues H13, 19-20 (FN), and Q68 contribute to the FAD site. A Phosphoserine modification is found at S83. 105 to 108 (LQWF) is a binding site for FAD. 127–129 (AYT) lines the substrate pocket. Residues 149 to 152 (TTGG), Y157, and R202 each bind FAD. Residues 226 to 275 (PSSLFDLNFQAGFLLKKEIEDEQKNNKYGLSVGHHLGKPIPTDNQIKARK) form an important for apoenzyme conformational stability region. A Glycyl lysine isopeptide (Lys-Gly) (interchain with G-Cter in SUMO2) cross-link involves residue K252.

Belongs to the NAD(P)H dehydrogenase (quinone) family. In terms of assembly, homodimer. Interacts with PDLIM4 isoform 2; this interaction stabilizes PDLIM4 isoform 2 in response to oxidative stress and protects it from ubiquitin-independent degradation by the core 20S proteasome. Interacts with TP73 (via SAM domain); this interaction is NADH-dependent, stabilizes TP73 in response to oxidative stress and protects it from ubiquitin-independent degradation by the 20S proteasome. Interacts with TP53; this interaction is NADH-dependent, stabilizes TP53 in response to oxidative stress and protects it from ubiquitin-independent degradation by the 20S proteasome. FAD serves as cofactor.

Its subcellular location is the cytoplasm. The protein localises to the cytosol. The catalysed reaction is a quinone + NADH + H(+) = a quinol + NAD(+). It carries out the reaction a quinone + NADPH + H(+) = a quinol + NADP(+). It catalyses the reaction ubiquinone-10 + NADH + H(+) = ubiquinol-10 + NAD(+). The enzyme catalyses menadione + NADH + H(+) = menadiol + NAD(+). Flavin-containing quinone reductase that catalyzes two-electron reduction of quinones to hydroquinones using either NADH or NADPH as electron donors. In a ping-pong kinetic mechanism, the electrons are sequentially transferred from NAD(P)H to flavin cofactor and then from reduced flavin to the quinone, bypassing the formation of semiquinone and reactive oxygen species. Regulates cellular redox state primarily through quinone detoxification. Reduces components of plasma membrane redox system such as coenzyme Q and vitamin quinones, producing antioxidant hydroquinone forms. In the process may function as superoxide scavenger to prevent hydroquinone oxidation and facilitate excretion. Alternatively, can activate quinones and their derivatives by generating redox reactive hydroquinones with DNA cross-linking antitumor potential. Acts as a gatekeeper of the core 20S proteasome known to degrade proteins with unstructured regions. Upon oxidative stress, interacts with tumor suppressors TP53 and TP73 in a NADH-dependent way and inhibits their ubiquitin-independent degradation by the 20S proteasome. The chain is NAD(P)H dehydrogenase [quinone] 1 (NQO1) from Cavia porcellus (Guinea pig).